The sequence spans 320 residues: o-succinylbenzoate synthase (320 aa).

The active-site Proton donor is K133. 3 residues coordinate Mg(2+): D161, E190, and D213. Catalysis depends on K235, which acts as the Proton acceptor.

Belongs to the mandelate racemase/muconate lactonizing enzyme family. MenC type 1 subfamily. A divalent metal cation serves as cofactor.

It catalyses the reaction (1R,6R)-6-hydroxy-2-succinyl-cyclohexa-2,4-diene-1-carboxylate = 2-succinylbenzoate + H2O. It functions in the pathway quinol/quinone metabolism; 1,4-dihydroxy-2-naphthoate biosynthesis; 1,4-dihydroxy-2-naphthoate from chorismate: step 4/7. Its pathway is quinol/quinone metabolism; menaquinone biosynthesis. In terms of biological role, converts 2-succinyl-6-hydroxy-2,4-cyclohexadiene-1-carboxylate (SHCHC) to 2-succinylbenzoate (OSB). This is o-succinylbenzoate synthase from Salmonella paratyphi A (strain ATCC 9150 / SARB42).